The chain runs to 382 residues: Homoserine O-acetyltransferase (382 aa).

The interval 1–20 is disordered; the sequence is MSTDQSPCPSATGAELLPPP. In terms of domain architecture, AB hydrolase-1 spans 59-363; the sequence is NVVLVEHALT…RDGHDGFLTE (305 aa). Serine 164 (nucleophile) is an active-site residue. Residue arginine 234 participates in substrate binding. Catalysis depends on residues aspartate 327 and histidine 357. Aspartate 358 is a substrate binding site.

Belongs to the AB hydrolase superfamily. MetX family. In terms of assembly, homodimer.

It localises to the cytoplasm. The catalysed reaction is L-homoserine + acetyl-CoA = O-acetyl-L-homoserine + CoA. The protein operates within amino-acid biosynthesis; L-methionine biosynthesis via de novo pathway; O-acetyl-L-homoserine from L-homoserine: step 1/1. Transfers an acetyl group from acetyl-CoA to L-homoserine, forming acetyl-L-homoserine. This is Homoserine O-acetyltransferase from Nocardia farcinica (strain IFM 10152).